The following is a 417-amino-acid chain: MRSLLLLSAFCLLEAALAAEVKKPAAAAAPGTAEKLSPKAATLAERSAGLAFSLYQAMAKDQAVENILVSPVVVASSLGLVSLGGKATTASQAKAVLSAEQLRDEEVHAGLGELLRSLSNSTARNVTWKLGSRLYGPSSVSFADDFVRTASSTTTASTPRSTSATSAALQSINEWAAQTTDGKLPEVTKDVERTDGALLVNAMFFKPHWDEKFHHKMVDNRGFMVTRSYTVGVMMMHRTGLYNYYDDEKEKLQIVEMPLAHKLSSLIILMPHHVEPLERLEKLLTKEQLKIWMGKMQKKAVAISLPKGVVEVTHDLQKHLAGLGLTEAIDKNKADLSRMSGKKDLYLASVFHATAFELDTDGNPFDQDIYGREELRSPKLFYADHPFIFLVRDTQSGSLLFIGRLVRPKGDKMRDEL.

A signal peptide spans 1–18 (MRSLLLLSAFCLLEAALA). Lys94 is modified (N6-succinyllysine). N-linked (GlcNAc...) asparagine glycosylation is found at Asn120 and Asn125. Ser141 carries the phosphoserine modification. At Lys206 the chain carries N6-acetyllysine. The residue at position 295 (Lys295) is an N6-succinyllysine. Lys318 bears the N6-acetyllysine mark. A Prevents secretion from ER motif is present at residues 414 to 417 (RDEL).

The protein belongs to the serpin family.

It localises to the endoplasmic reticulum lumen. In terms of biological role, binds specifically to collagen. Could be involved as a chaperone in the biosynthetic pathway of collagen. This is Serpin H1 (SERPINH1) from Pongo abelii (Sumatran orangutan).